Consider the following 343-residue polypeptide: MGSAEDRRFEVLRAIVADFVATKEPIGSKTLVDRHNLGVSSATVRNDMAVLEAEGYITQPHTSSGRVPTEKGYREFVDRLDDVKPMSSAERRAILSFLESGVDLDDVLRRAVRLLAQLTRQVAVVQYPMLSTSTVRRLEVVALTPARLLLIVITDSGRIDQRIVELGDAIDEDELTQLRDLLGQALEGKPLTTASIAVSDLASHLGGQGRLANAVGRSATVLVESLVEHREERLLLGGTANLTRNTADFGGSLRSLLEALEEQVVVLRLLAKQQEAGKVTVRIGHETEAEEMAGASVVTTAYGSAGKVFGGMGVLGPTRMDYPGTIANVAAVALYIGEVLGNR.

Belongs to the HrcA family.

Its function is as follows. Negative regulator of class I heat shock genes (grpE-dnaK-dnaJ and groELS operons). Prevents heat-shock induction of these operons. This Mycolicibacterium gilvum (strain PYR-GCK) (Mycobacterium gilvum (strain PYR-GCK)) protein is Heat-inducible transcription repressor HrcA.